A 153-amino-acid polypeptide reads, in one-letter code: MRKYIPLVLFIFSWPVLCADIHGRVVRVLDGDTIEVMDSRKAVRIRLVNIDAPEKKQDYGRWSTDMMKSLVAGKTVTVTYFQRDRYGRILGQVYAPDGMNVNQFMVRAGAAWVYEQYNTDPVLPVLQNEARQQKRGLWSDADPVPPWIWRHRK.

Residues 1–19 form the signal peptide; that stretch reads MRKYIPLVLFIFSWPVLCA. Catalysis depends on residues Arg-46, Glu-54, and Arg-88.

It belongs to the thermonuclease family.

This is an uncharacterized protein from Escherichia coli.